Consider the following 461-residue polypeptide: F-box protein At3g62230 (461 aa).

In terms of domain architecture, F-box spans 7 to 55; the sequence is VDIISTLSDFLLVLIISNLSFKEALSTSRLSTRWRHICRETRNISFRED.

Part of a SCF (ASK-cullin-F-box) protein ligase complex. Interacts with ASK4.

Its subcellular location is the nucleus. The protein operates within protein modification; protein ubiquitination. Its function is as follows. Component of SCF(ASK-cullin-F-box) E3 ubiquitin ligase complexes, which may mediate the ubiquitination and subsequent proteasomal degradation of target proteins. This is F-box protein At3g62230 from Arabidopsis thaliana (Mouse-ear cress).